The chain runs to 354 residues: Holliday junction branch migration complex subunit RuvB (354 aa).

The tract at residues 4–191 (TDKLAAPARV…FGIVARLEFY (188 aa)) is large ATPase domain (RuvB-L). Residues leucine 30, arginine 31, glycine 72, lysine 75, threonine 76, threonine 77, 138 to 140 (EDY), arginine 181, tyrosine 191, and arginine 228 each bind ATP. Threonine 76 serves as a coordination point for Mg(2+). The interval 192 to 262 (TAEELARIVT…MADAALAMLD (71 aa)) is small ATPAse domain (RuvB-S). The head domain (RuvB-H) stretch occupies residues 265–354 (RVGFDLMDRK…GDAGELFGDA (90 aa)). Residues arginine 301, arginine 320, and arginine 325 each coordinate DNA.

The protein belongs to the RuvB family. As to quaternary structure, homohexamer. Forms an RuvA(8)-RuvB(12)-Holliday junction (HJ) complex. HJ DNA is sandwiched between 2 RuvA tetramers; dsDNA enters through RuvA and exits via RuvB. An RuvB hexamer assembles on each DNA strand where it exits the tetramer. Each RuvB hexamer is contacted by two RuvA subunits (via domain III) on 2 adjacent RuvB subunits; this complex drives branch migration. In the full resolvosome a probable DNA-RuvA(4)-RuvB(12)-RuvC(2) complex forms which resolves the HJ.

The protein localises to the cytoplasm. The catalysed reaction is ATP + H2O = ADP + phosphate + H(+). In terms of biological role, the RuvA-RuvB-RuvC complex processes Holliday junction (HJ) DNA during genetic recombination and DNA repair, while the RuvA-RuvB complex plays an important role in the rescue of blocked DNA replication forks via replication fork reversal (RFR). RuvA specifically binds to HJ cruciform DNA, conferring on it an open structure. The RuvB hexamer acts as an ATP-dependent pump, pulling dsDNA into and through the RuvAB complex. RuvB forms 2 homohexamers on either side of HJ DNA bound by 1 or 2 RuvA tetramers; 4 subunits per hexamer contact DNA at a time. Coordinated motions by a converter formed by DNA-disengaged RuvB subunits stimulates ATP hydrolysis and nucleotide exchange. Immobilization of the converter enables RuvB to convert the ATP-contained energy into a lever motion, pulling 2 nucleotides of DNA out of the RuvA tetramer per ATP hydrolyzed, thus driving DNA branch migration. The RuvB motors rotate together with the DNA substrate, which together with the progressing nucleotide cycle form the mechanistic basis for DNA recombination by continuous HJ branch migration. Branch migration allows RuvC to scan DNA until it finds its consensus sequence, where it cleaves and resolves cruciform DNA. This chain is Holliday junction branch migration complex subunit RuvB, found in Cupriavidus taiwanensis (strain DSM 17343 / BCRC 17206 / CCUG 44338 / CIP 107171 / LMG 19424 / R1) (Ralstonia taiwanensis (strain LMG 19424)).